A 577-amino-acid chain; its full sequence is Optineurin (577 aa).

2 disordered regions span residues 1 to 32 (MSHQ…HPNL) and 101 to 143 (SHEN…KDQL). Residues 38-170 (EELLQQMKEL…VSELQLKLNS (133 aa)) adopt a coiled-coil conformation. The tract at residues 58–209 (MKLNNQAMKG…GPTRTVSTGT (152 aa)) is interaction with Rab8. Residues 176-181 (DSFVEI) carry the LIR motif. S177 carries the post-translational modification Phosphoserine; by TBK1. A compositionally biased stretch (basic and acidic residues) spans 186–197 (GEAEGSVKEIKH). 2 disordered regions span residues 186–209 (GEAE…STGT) and 261–297 (VSDF…TVGS). Position 198 is a phosphoserine (S198). A coiled-coil region spans residues 239–508 (CLREGNQKVE…LLKENDAFED (270 aa)). 2 stretches are compositionally biased toward basic and acidic residues: residues 261–274 (VSDF…RSEI) and 281–292 (STEKENDEEKGP). S342 is modified (phosphoserine). The interval 411-577 (TRKESEKVDR…LQIHVMDCII (167 aa)) is interaction with HD. The tract at residues 412–520 (RKESEKVDRA…RQSLMEMQSR (109 aa)) is interaction with MYO6. Positions 474–479 (DFHAER) match the UBAN motif. A Phosphoserine modification is found at S526. The segment at 547 to 577 (QRNIPIHSCPKCGEVLPDIDTLQIHVMDCII) adopts a CCHC NOA-type zinc-finger fold. Zn(2+)-binding residues include C555, C558, H571, and C575.

Self-associates. Interacts with HD. Interacts with GTF3A. Interacts with MYO6. Interacts (via UBAN) with ubiquitinated TFRC. Interacts with GTP-bound Rab8 (RAB8A and/or RAB8B). Interacts with TBC1D17. Interacts with TBK1. Interacts with TRAF3. Binds to linear ubiquitin chains. Interacts with LC3 family members MAP1LC3A, MAP1LC3B, GABARAP, GABARAPL1 and GABARAPL2; OPTN phosphorylation increases the association (at least with MAP1LC3B). Interacts with RAB12; the interaction may be indirect. Interacts with TBK1; this interaction leads to the Golgi localization of TBK1 and its subsequent activation. Interacts with palmitoyltransferase ZDHHC17/HIP14; the interaction does not lead to palmitoylation of OPTN. Interacts with CYLD. Interacts with TOM1; the interaction is indirect and is mediated by MYO6, which acts as a bridge between TOM1 and OPTN. Interacts with USP12; the interaction is independent of USP12 deubiquitinase activity and may be involved in regulation of autophagic flux. As to quaternary structure, (Microbial infection) Interacts with E3 14.7 kDa protein of group C human adenovirus. Interacts with Bluetongue virus protein NS3. In terms of processing, phosphorylated by TBK1, leading to restrict bacterial proliferation in case of infection. Phosphorylation is induced by phorbol esters and decreases its half-time. As to expression, present in aqueous humor of the eye (at protein level). Expressed in the trabecular meshwork (at protein level). Expressed in nonpigmented ciliary epithelium (at protein level). Expressed at high levels in skeletal muscle, also detected in heart, brain, pancreas, kidney, placenta and liver. Expressed in dermal fibroblasts (at protein level).

The protein localises to the cytoplasm. It is found in the perinuclear region. Its subcellular location is the golgi apparatus. It localises to the trans-Golgi network. The protein resides in the cytoplasmic vesicle. The protein localises to the autophagosome. It is found in the recycling endosome. Plays an important role in the maintenance of the Golgi complex, in membrane trafficking, in exocytosis, through its interaction with myosin VI and Rab8. Links myosin VI to the Golgi complex and plays an important role in Golgi ribbon formation. Plays a role in the activation of innate immune response during viral infection. Mechanistically, recruits TBK1 at the Golgi apparatus, promoting its trans-phosphorylation after RLR or TLR3 stimulation. In turn, activated TBK1 phosphorylates its downstream partner IRF3 to produce IFN-beta/IFNB1. Plays a neuroprotective role in the eye and optic nerve. May act by regulating membrane trafficking and cellular morphogenesis via a complex that contains Rab8 and huntingtin (HD). Mediates the interaction of Rab8 with the probable GTPase-activating protein TBC1D17 during Rab8-mediated endocytic trafficking, such as that of transferrin receptor (TFRC/TfR); regulates Rab8 recruitment to tubules emanating from the endocytic recycling compartment. Autophagy receptor that interacts directly with both the cargo to become degraded and an autophagy modifier of the MAP1 LC3 family; targets ubiquitin-coated bacteria (xenophagy), such as cytoplasmic Salmonella enterica, and appears to function in the same pathway as SQSTM1 and CALCOCO2/NDP52. Functionally, (Microbial infection) May constitute a cellular target for various viruses, such as adenovirus E3 14.7 or Bluetongue virus, to inhibit innate immune response. During RNA virus infection, such as that of Sendai virus, negatively regulates the induction of IFNB1. The chain is Optineurin (OPTN) from Homo sapiens (Human).